A 254-amino-acid polypeptide reads, in one-letter code: Switch-activating protein 1 (254 aa).

The span at 1–10 (MEAPKMELKS) shows a compositional bias: basic and acidic residues. The interval 1–30 (MEAPKMELKSYKRKNASLSPSSSPAKAQRT) is disordered. Positions 16 to 25 (ASLSPSSSPA) are enriched in low complexity. Residues Ser17 and Ser19 each carry the phosphoserine modification. Repeat copies occupy residues 221 to 224 (GVNM), 225 to 228 (GTNM), 229 to 232 (GANM), and 233 to 236 (GANM). The interval 221–236 (GVNMGTNMGANMGANM) is 4 X 4 AA tandem repeats of G-[ATV]-N-M.

As to quaternary structure, homodimer.

It is found in the nucleus. Binds to sequences required for mating-type switching. Makes a simultaneous contact with both the alpha and beta domains of the switch-activating site SAS1. Also binds to replication fork barrier 1 (RFB1) located within a 78 base pair sequence near the 3' end of the rRNA coding region. This leads to replication fork blockage. It binds the consensus sequence 5'-TA[AG]GCAGNTN[CT]AACG[AC]G-3'. Functionally, has a role in chromosome organization and integrity where it is involved in chromosome segregation. Has a role in sister chromatid cohesion and condensation. The polypeptide is Switch-activating protein 1 (sap1) (Schizosaccharomyces pombe (strain 972 / ATCC 24843) (Fission yeast)).